The chain runs to 381 residues: Selenoprotein P (381 aa).

Residues 1–19 (MWRSLGLALALCLLPLGGT) form the signal peptide. N-linked (GlcNAc...) asparagine glycosylation is present at asparagine 46. Residue selenocysteine 59 is a non-standard amino acid, selenocysteine. N-linked (GlcNAc...) asparagine glycans are attached at residues asparagine 83, asparagine 119, and asparagine 128. The tract at residues 202-268 (SPHYHHEHHH…ENRDMPGSED (67 aa)) is disordered. Positions 204–217 (HYHHEHHHNHRHQH) are enriched in basic residues. A compositionally biased stretch (polar residues) spans 218–229 (LGSSELSENQQP). Residues 243 to 255 (LHHHHKHKGQHRQ) show a composition bias toward basic residues. A Phosphoserine modification is found at serine 266. Residues selenocysteine 318 and selenocysteine 330 are each a non-standard amino acid (selenocysteine). Asparagine 338 carries N-linked (GlcNAc...) asparagine glycosylation. Non-standard amino acids (selenocysteine) are located at selenocysteine 345, selenocysteine 352, selenocysteine 367, selenocysteine 369, selenocysteine 376, and selenocysteine 378. The tract at residues 352 to 381 (UQISQQLIPTEASTSURUKNQAKKUEUPSN) is disordered. Polar residues predominate over residues 353 to 369 (QISQQLIPTEASTSURU).

Belongs to the selenoprotein P family. Post-translationally, phosphorylation sites are present in the extracellular medium.

The protein resides in the secreted. Its function is as follows. Might be responsible for some of the extracellular antioxidant defense properties of selenium or might be involved in the transport of selenium. May supply selenium to tissues such as brain and testis. This chain is Selenoprotein P, found in Pongo abelii (Sumatran orangutan).